A 387-amino-acid polypeptide reads, in one-letter code: Cytochrome b (387 aa).

A run of 4 helical transmembrane segments spans residues 32 to 52 (FGSL…TLAM), 76 to 98 (WLVR…LHIG), 113 to 133 (TWAI…LGYV), and 179 to 199 (FFAL…MHLI). H82 and H96 together coordinate heme b. H183 and H197 together coordinate heme b. H202 contacts a ubiquinone. The next 4 helical transmembrane spans lie at 226–246 (FIFK…IFVF), 290–310 (LLGV…PITD), 322–342 (LSKV…QIGA), and 349–369 (FIEF…VIVP).

The protein belongs to the cytochrome b family. In terms of assembly, fungal cytochrome b-c1 complex contains 10 subunits; 3 respiratory subunits, 2 core proteins and 5 low-molecular weight proteins. Cytochrome b-c1 complex is a homodimer. Heme b is required as a cofactor.

The protein localises to the mitochondrion inner membrane. Component of the ubiquinol-cytochrome c reductase complex (complex III or cytochrome b-c1 complex) that is part of the mitochondrial respiratory chain. The b-c1 complex mediates electron transfer from ubiquinol to cytochrome c. Contributes to the generation of a proton gradient across the mitochondrial membrane that is then used for ATP synthesis. The polypeptide is Cytochrome b (cob) (Emericella nidulans (Aspergillus nidulans)).